The following is a 95-amino-acid chain: UPF0213 protein PEPE_0875 (95 aa).

A GIY-YIG domain is found at 7–82 (NGFYFYVLRC…KQRTRSSKIK (76 aa)).

The protein belongs to the UPF0213 family.

This chain is UPF0213 protein PEPE_0875, found in Pediococcus pentosaceus (strain ATCC 25745 / CCUG 21536 / LMG 10740 / 183-1w).